Reading from the N-terminus, the 291-residue chain is Formamidopyrimidine-DNA glycosylase (291 aa).

The Schiff-base intermediate with DNA role is filled by P2. Residue E3 is the Proton donor of the active site. K58 acts as the Proton donor; for beta-elimination activity in catalysis. The DNA site is built by H100, R123, and K166. The FPG-type zinc finger occupies 257–291 (SVYGREGKECLHCGIPIVRILQSGRSSFYCSQCQK). The Proton donor; for delta-elimination activity role is filled by R281.

It belongs to the FPG family. As to quaternary structure, monomer. Zn(2+) serves as cofactor.

It catalyses the reaction Hydrolysis of DNA containing ring-opened 7-methylguanine residues, releasing 2,6-diamino-4-hydroxy-5-(N-methyl)formamidopyrimidine.. It carries out the reaction 2'-deoxyribonucleotide-(2'-deoxyribose 5'-phosphate)-2'-deoxyribonucleotide-DNA = a 3'-end 2'-deoxyribonucleotide-(2,3-dehydro-2,3-deoxyribose 5'-phosphate)-DNA + a 5'-end 5'-phospho-2'-deoxyribonucleoside-DNA + H(+). Involved in base excision repair of DNA damaged by oxidation or by mutagenic agents. Acts as a DNA glycosylase that recognizes and removes damaged bases. Has a preference for oxidized purines, such as 7,8-dihydro-8-oxoguanine (8-oxoG). Has AP (apurinic/apyrimidinic) lyase activity and introduces nicks in the DNA strand. Cleaves the DNA backbone by beta-delta elimination to generate a single-strand break at the site of the removed base with both 3'- and 5'-phosphates. The chain is Formamidopyrimidine-DNA glycosylase from Bartonella henselae (strain ATCC 49882 / DSM 28221 / CCUG 30454 / Houston 1) (Rochalimaea henselae).